The following is an 804-amino-acid chain: Leucine--tRNA ligase (804 aa).

The 'HIGH' region motif lies at 40–51 (PYPSGAGLHVGH). Residues 576–580 (KMSKS) carry the 'KMSKS' region motif. Lysine 579 contributes to the ATP binding site.

This sequence belongs to the class-I aminoacyl-tRNA synthetase family.

Its subcellular location is the cytoplasm. The enzyme catalyses tRNA(Leu) + L-leucine + ATP = L-leucyl-tRNA(Leu) + AMP + diphosphate. The chain is Leucine--tRNA ligase from Staphylococcus haemolyticus (strain JCSC1435).